The primary structure comprises 804 residues: ABC transporter aclQ (804 aa).

9 consecutive transmembrane segments (helical) span residues 3 to 23 (LAVL…ISYL), 52 to 72 (FTAI…SITI), 97 to 117 (IAVF…PFSP), 119 to 139 (LSHS…LAMF), 155 to 175 (LQLG…ALYF), 206 to 226 (HGGW…LWPS), 239 to 259 (FVLL…LGIV), 349 to 369 (LVFQ…YFLI), and 373 to 393 (AFYS…TIYM). An ABC transmembrane type-1 domain is found at 236–518 (IFCFVLLVIQ…FGSFYTQVQN (283 aa)). A glycan (N-linked (GlcNAc...) asparagine) is linked at Asn-460. 2 helical membrane-spanning segments follow: residues 464–484 (NLLF…QISA) and 489–509 (VAMF…LNFF). The ABC transporter domain occupies 552 to 786 (VEFTHVNFAY…NGMYSQMWAK (235 aa)). 585-592 (GESGSGKS) contributes to the ATP binding site. Asn-639 and Asn-797 each carry an N-linked (GlcNAc...) asparagine glycan.

Belongs to the ABC transporter superfamily. ABCB family. Heavy Metal importer (TC 3.A.1.210) subfamily.

Its subcellular location is the membrane. Functionally, ABC transporter; part of the gene cluster that mediates the biosynthesis of aspirochlorine (or antibiotic A30641), an unusual halogenated spiro compound with distinctive antifungal properties due to selective inhibition of protein biosynthesis, and which is also active against bacteria, viruses, and murine tumor cells. The sequence is that of ABC transporter aclQ from Aspergillus oryzae (strain ATCC 42149 / RIB 40) (Yellow koji mold).